Consider the following 150-residue polypeptide: Ribonuclease K6 (150 aa).

An N-terminal signal peptide occupies residues Met1–Ala23. The active-site Proton acceptor is the His38. Cystine bridges form between Cys46-Cys104, Cys60-Cys114, Cys78-Cys129, and Cys85-Cys92. Asn55 is a glycosylation site (N-linked (GlcNAc...) asparagine). Residues Lys61–Thr65 and Lys86 contribute to the substrate site. Asn100 is a glycosylation site (N-linked (GlcNAc...) asparagine). Arg105 serves as a coordination point for substrate. His145 (proton donor) is an active-site residue.

This sequence belongs to the pancreatic ribonuclease family. In terms of assembly, interacts (via N-terminus) with bacterial lipopolysaccharide (LPS).

Its subcellular location is the secreted. It localises to the lysosome. It is found in the cytoplasmic granule. Ribonuclease which shows a preference for the pyrimidines uridine and cytosine. Has potent antibacterial activity against a range of Gram-positive and Gram-negative bacteria, including P.aeruginosa, A.baumanii, M.luteus, S.aureus, E.faecalis, E.faecium, S.saprophyticus and E.coli. Causes loss of bacterial membrane integrity, and also promotes agglutination of Gram-negative bacteria. Probably contributes to urinary tract sterility. Bactericidal activity is independent of RNase activity. The sequence is that of Ribonuclease K6 (RNASE6) from Papio hamadryas (Hamadryas baboon).